The following is a 217-amino-acid chain: Urease accessory protein UreE (217 aa).

The interval 148–217 (AYGEAAAHGH…DHDHGSGHHH (70 aa)) is disordered. A compositionally biased stretch (basic and acidic residues) spans 160–171 (AGHDHAHDHDHG). Over residues 193–202 (AAAPAPHVHG) the composition is skewed to low complexity. Over residues 206–217 (GHDHDHGSGHHH) the composition is skewed to basic and acidic residues.

The protein belongs to the UreE family.

It localises to the cytoplasm. Involved in urease metallocenter assembly. Binds nickel. Probably functions as a nickel donor during metallocenter assembly. This Methylibium petroleiphilum (strain ATCC BAA-1232 / LMG 22953 / PM1) protein is Urease accessory protein UreE.